Consider the following 229-residue polypeptide: Transmembrane emp24 domain-containing protein 5 (229 aa).

Positions 1-27 are cleaved as a signal peptide; it reads MGDKIWLPFPVLLLAALPPVLLPGAAG. Over 28–196 the chain is Lumenal; the sequence is FTPSLDSDFT…IQESNFDRVN (169 aa). The region spanning 45–126 is the GOLD domain; that stretch reads RECFYQPMPL…EKVIFFELIL (82 aa). Residues 197 to 217 traverse the membrane as a helical segment; that stretch reads FWSMVNLVVMVVVSAIQVYML. The Cytoplasmic portion of the chain corresponds to 218–229; the sequence is KSLFEDKRKSRT.

Belongs to the EMP24/GP25L family. In terms of assembly, interacts with TMED9 and TMED10.

Its subcellular location is the endoplasmic reticulum membrane. It localises to the golgi apparatus. The protein localises to the cis-Golgi network membrane. The protein resides in the endoplasmic reticulum-Golgi intermediate compartment membrane. Potential role in vesicular protein trafficking, mainly in the early secretory pathway. Required for the maintenance of the Golgi apparatus; involved in protein exchange between Golgi stacks during assembly. Probably not required for COPI-vesicle-mediated retrograde transport. In Pongo abelii (Sumatran orangutan), this protein is Transmembrane emp24 domain-containing protein 5 (TMED5).